Consider the following 138-residue polypeptide: Protein FAM136A (138 aa).

N-acetylalanine is present on Ala-2. Residues Thr-124 and Thr-126 each carry the phosphothreonine modification.

It belongs to the FAM136 family.

The polypeptide is Protein FAM136A (Fam136a) (Mus musculus (Mouse)).